A 23-amino-acid chain; its full sequence is Alyteserin-1a (23 aa).

N23 carries the post-translational modification Asparagine amide.

As to expression, expressed by the skin glands.

It is found in the secreted. Its subcellular location is the target cell membrane. Antibacterial peptide with amphipathic alpha-helical structure. Shows selective growth inhibitory activity against the Gram-negative bacteria E.coli (MIC=25 uM) Has a weak hemolytic activity against human erythrocytes (LC(50)&gt;100 uM). Is very weakly active against S.aureus (MIC=200 uM). The polypeptide is Alyteserin-1a (Alytes obstetricans (Common midwife toad)).